The chain runs to 179 residues: UPF0227 protein Shew185_2404 (179 aa).

The protein belongs to the UPF0227 family.

This Shewanella baltica (strain OS185) protein is UPF0227 protein Shew185_2404.